Consider the following 212-residue polypeptide: Eukaryotic translation initiation factor 4E-1 (212 aa).

Cys125 and Cys129 form a disulfide bridge.

This sequence belongs to the eukaryotic initiation factor 4E family. EIF4F is a multi-subunit complex, the composition of which varies with external and internal environmental conditions. It is composed of at least EIF4A, EIF4E and EIF4G. EIF4E is also known to interact with other partners, including pgl-1. Interacts with ifet-1. In terms of tissue distribution, enriched in the germline from L3 larvae to adults; regions of the gonad undergoing spermatogenesis. Expressed in germ granules (P granules); when associated with pgl-1.

The protein resides in the cytoplasm. Recognizes and binds the 7-methylguanosine-containing mRNA cap during an early step in the initiation of protein synthesis and facilitates ribosome binding by inducing the unwinding of the mRNAs secondary structures. All 5 eIF4E proteins bind monomethyl cap structures. Only ife-1, ife-2 and ife-5 bind trimethyl cap structures which result from trans-splicing. Translation of trimethyl cap structure mRNAs may be regulated by intracellular redox state; disulfide bonds change the width and depth of the cap-binding cavity determining selectivity to mRNA caps. Required for progression through meiotic divisions during spermatogenesis and for the production of viable sperm. It is not required during oogenesis. This is Eukaryotic translation initiation factor 4E-1 (ife-1) from Caenorhabditis elegans.